Consider the following 1462-residue polypeptide: DNA topoisomerase 2 (1462 aa).

Residues N79, N108, 136–138, and 149–156 contribute to the ATP site; these read SSN and GRNGYGAK. The interaction with DNA stretch occupies residues 332–334; sequence NKK. An ATP-binding site is contributed by 365 to 367; sequence QTK. Positions 442–556 constitute a Toprim domain; that stretch reads CTLILTEGDS…SLLKVPSFLV (115 aa). Mg(2+)-binding residues include E448, D525, and D527. Residues 671-1131 enclose the Topo IIA-type catalytic domain; that stretch reads KDFVNKELIL…PTTSLWLKDL (461 aa). Y761 functions as the O-(5'-phospho-DNA)-tyrosine intermediate in the catalytic mechanism. Positions 947 to 956 are interaction with DNA; sequence KLTSTISTSN. Disordered stretches follow at residues 1040–1077 and 1147–1462; these read PMPR…SVSV and EDDR…EDDD. The segment covering 1056–1068 has biased composition (acidic residues); that stretch reads NDDDSEEQEDAEP. A compositionally biased stretch (basic residues) spans 1167–1181; the sequence is PAKKPPQPRKNTKKA. A compositionally biased stretch (low complexity) spans 1198-1207; the sequence is AVEAAKPAEV. Residues 1240-1250 show a composition bias toward polar residues; the sequence is IESSGEKSQAM. Positions 1260 to 1275 are enriched in basic residues; sequence AGKKQNNKRGGAKKKS. Positions 1282-1300 are enriched in acidic residues; sequence SDSDNEVNDVDDDDDDFEE. 2 stretches are compositionally biased toward low complexity: residues 1314 to 1334 and 1419 to 1430; these read KPAA…APAA and APQPARARPQRA. Residues 1442–1462 show a composition bias toward acidic residues; it reads SESEEDSDEDAELSDFEEDDD.

It belongs to the type II topoisomerase family. As to quaternary structure, homodimer. Requires Mg(2+) as cofactor. Mn(2+) is required as a cofactor. It depends on Ca(2+) as a cofactor. As to expression, abundant in proliferative tissues.

The enzyme catalyses ATP-dependent breakage, passage and rejoining of double-stranded DNA.. Functionally, control of topological states of DNA by transient breakage and subsequent rejoining of DNA strands. Topoisomerase II makes double-strand breaks. The protein is DNA topoisomerase 2 (TOP2) of Pisum sativum (Garden pea).